Consider the following 853-residue polypeptide: MSEDGSNVEPGGFPRFESLEEPGSEISDLLDEASPYSKSKDSNQIYEANPSKDTEQSAASFTSQLDRNEEKNTGIPFSETNIADIIPLSIEESLQSSGSSETKMAEDYYPVKFPTGRKFRGRIFNGNQKGLDMKSDNFTVNLDAKGLQEFPVDIVKVKYVKYLYLDKNQIKNFQGIDPGDLLGLEILSLQENGLSSIPLEIQLFHNLKILNASYNEISQIPKELLQLENMRQLLLNSNHIDTLPSGLEHLRYLETLSLGKNMLTYIPDSLSSLKNLRILNLEYNQLTIFSKSLCFLPKLNSLNLTGNMIGSLPKEVRELKNLESLLMDHNKLTFLAVEIFQLPKIKELHLADNKLEAISPKIENFKELRLLNLDKNLLQSIPKKISHCVNLESLSLSDNNIEELPKKIRKLKNLRQLHVNRNKMITMTEEISHLSNIHILEFSGNQITHVPIEIKNCRKITRVELNYNNIMYFPVGLCALQSLDYLSFNGNYISEIPVDMSFSKQLLHLELNRNKLTVFSKHLCSLTNLEYLDLAKNQIMTIPSCISAMVSLHVLILSDNKFESFPKELCSLKNLRVLDISENKLQKIPLEISKLKRIQKLNLSNNIFTNFPVELCQLQTLEELNISQTSGKKLTRLPEEVSHMTQLKILNISNNAIKDIPKNIGELRSLVSFYASNNQISSLPSSFLSLEVLQSLDLRGNNMTALPSGIYKLSSLKEINFDDNPLMRPPMEICKGKEMHMITCYLQRADERDEKILEKIFNIVANSITETNFEFLQQKLNMASSANNMPVRPTTPLNERIYQALIKWKAEKDVQFTATALRDKLFRALNMIGAYDIMDKITALNLYTSAIKL.

The tract at residues 1-78 (MSEDGSNVEP…EEKNTGIPFS (78 aa)) is disordered. A compositionally biased stretch (acidic residues) spans 19–31 (LEEPGSEISDLLD). A compositionally biased stretch (polar residues) spans 56–65 (QSAASFTSQL). LRR repeat units lie at residues 133–157 (MKSDNFTVNLDAKGLQEFPVDIVKV), 159–180 (YVKYLYLDKNQIKNFQGIDPGD), 183–204 (GLEILSLQENGLSSIPLEIQLF), 206–227 (NLKILNASYNEISQIPKELLQL), 229–251 (NMRQLLLNSNHIDTLPSGLEHLR), 252–274 (YLETLSLGKNMLTYIPDSLSSLK), 275–297 (NLRILNLEYNQLTIFSKSLCFLP), 298–319 (KLNSLNLTGNMIGSLPKEVREL), 321–342 (NLESLLMDHNKLTFLAVEIFQL), 344–365 (KIKELHLADNKLEAISPKIENF), 367–388 (ELRLLNLDKNLLQSIPKKISHC), 390–411 (NLESLSLSDNNIEELPKKIRKL), 413–435 (NLRQLHVNRNKMITMTEEISHLS), 436–457 (NIHILEFSGNQITHVPIEIKNC), 459–481 (KITRVELNYNNIMYFPVGLCALQ), 482–503 (SLDYLSFNGNYISEIPVDMSFS), 505–527 (QLLHLELNRNKLTVFSKHLCSLT), 528–549 (NLEYLDLAKNQIMTIPSCISAM), 551–573 (SLHVLILSDNKFESFPKELCSLK), 574–596 (NLRVLDISENKLQKIPLEISKLK), 597–618 (RIQKLNLSNNIFTNFPVELCQL), 620–641 (TLEELNISQTSGKKLTRLPEEV), 646–668 (QLKILNISNNAIKDIPKNIGELR), 669–690 (SLVSFYASNNQISSLPSSFLSL), 692–713 (VLQSLDLRGNNMTALPSGIYKL), and 715–736 (SLKEINFDDNPLMRPPMEICKG). A Death domain is found at 757-845 (LEKIFNIVAN…DIMDKITALN (89 aa)).

This chain is Leucine-rich repeat and death domain-containing protein 1 (Lrrd1), found in Mus musculus (Mouse).